The following is a 443-amino-acid chain: Leucine-rich repeat-containing protein 17 (443 aa).

A signal peptide spans 1 to 15; the sequence is MRIVAILLLFCLCRA. Positions 20–48 are disordered; it reads KSSPGVLRSQGNPSRSHGRGGRRGSSPVK. 3 LRR repeats span residues 84–105, 108–129, and 132–153; these read DLLH…MFAK, RLKS…AFFG, and KLTT…AFIY. The LRRCT 1 domain maps to 165 to 216; it reads NPWHCTCELETLISMLQIPRNRNLGNYAKCGSPPALRNKKLLQLKPQELCDE. The LRRNT domain maps to 229 to 270; sequence SGIPAVIRPEADSTLCHNYVFPIQTLDCKRKELKKVPSNIPP. LRR repeat units lie at residues 271 to 292, 295 to 316, and 319 to 342; these read DIVK…EFED, ELKK…AFLG, and HLEE…EDLY. Residues 352 to 404 form the LRRCT 2 domain; it reads NPWRCDYSIHYLYYWLKHHYNVHYNGLECKTPEEYKGWSVGKYVRSYYEECPK.

As to expression, expressed in osteoblasts, spleen, lung and heart.

It is found in the secreted. The protein localises to the extracellular space. Its function is as follows. Involved in bone homeostasis. Acts as a negative regulator of RANKL-induced osteoclast precursor differentiation from bone marrow precursors. This Mus musculus (Mouse) protein is Leucine-rich repeat-containing protein 17 (Lrrc17).